A 312-amino-acid chain; its full sequence is Putative HTH-type transcriptional regulatory protein TV0294 (312 aa).

The region spanning 133 to 186 (LRERRNELNLSIGNISSYLGVSRRSVSLYENGSAATIDIFIRLRNILKADIVDH) is the HTH cro/C1-type domain. The segment at residues 144-163 (IGNISSYLGVSRRSVSLYEN) is a DNA-binding region (H-T-H motif).

This chain is Putative HTH-type transcriptional regulatory protein TV0294, found in Thermoplasma volcanium (strain ATCC 51530 / DSM 4299 / JCM 9571 / NBRC 15438 / GSS1).